Reading from the N-terminus, the 224-residue chain is Redox-sensing transcriptional repressor Rex (224 aa).

Residues Arg-17–Phe-56 constitute a DNA-binding region (H-T-H motif). Gly-91–Gly-96 lines the NAD(+) pocket.

The protein belongs to the transcriptional regulatory Rex family. In terms of assembly, homodimer.

It localises to the cytoplasm. Modulates transcription in response to changes in cellular NADH/NAD(+) redox state. The polypeptide is Redox-sensing transcriptional repressor Rex (Thermoanaerobacter sp. (strain X514)).